Reading from the N-terminus, the 124-residue chain is Mitochondrial import inner membrane translocase subunit TIM16 (124 aa).

Positions 58 to 109 (EAQQILNISKLSPEEVQNYEHLFKVNDKSVGDSFYLQSKVVRAKERLDEELQ) are J-like. Phosphoserine is present on S69.

It belongs to the TIM16/PAM16 family. Probable component of the PAM complex at least composed of a mitochondrial HSP70 protein, GRPEL1 or GRPEL2, TIMM44, TIMM16/PAM16 and TIMM14/DNAJC19. Interacts with DNAJC19. Directly interacts with DNAJC15; this interaction counteracts DNAJC15-dependent stimulation of HSPA9 ATPase activity. Associates with the TIM23 complex.

The protein resides in the mitochondrion inner membrane. Functionally, regulates ATP-dependent protein translocation into the mitochondrial matrix. Inhibits DNAJC19 stimulation of HSPA9/Mortalin ATPase activity. This chain is Mitochondrial import inner membrane translocase subunit TIM16 (Magmas-ps1), found in Rattus norvegicus (Rat).